The chain runs to 308 residues: NAD kinase (308 aa).

The active-site Proton acceptor is D86. NAD(+)-binding positions include 86-87 (DG), R91, 160-161 (NE), D190, and 201-206 (TAYAFS).

Belongs to the NAD kinase family. Requires a divalent metal cation as cofactor.

It is found in the cytoplasm. The catalysed reaction is NAD(+) + ATP = ADP + NADP(+) + H(+). Its function is as follows. Involved in the regulation of the intracellular balance of NAD and NADP, and is a key enzyme in the biosynthesis of NADP. Catalyzes specifically the phosphorylation on 2'-hydroxyl of the adenosine moiety of NAD to yield NADP. The sequence is that of NAD kinase from Mycolicibacterium paratuberculosis (strain ATCC BAA-968 / K-10) (Mycobacterium paratuberculosis).